Here is a 93-residue protein sequence, read N- to C-terminus: Large ribosomal subunit protein uL23cz/uL23cy (93 aa).

The protein belongs to the universal ribosomal protein uL23 family. In terms of assembly, part of the 50S ribosomal subunit.

It is found in the plastid. The protein resides in the chloroplast. Binds to 23S rRNA. In Atropa belladonna (Belladonna), this protein is Large ribosomal subunit protein uL23cz/uL23cy (rpl23-A).